Here is a 232-residue protein sequence, read N- to C-terminus: Large ribosomal subunit protein uL1 (232 aa).

It belongs to the universal ribosomal protein uL1 family. As to quaternary structure, part of the 50S ribosomal subunit.

Its function is as follows. Binds directly to 23S rRNA. The L1 stalk is quite mobile in the ribosome, and is involved in E site tRNA release. Protein L1 is also a translational repressor protein, it controls the translation of the L11 operon by binding to its mRNA. In Methylorubrum populi (strain ATCC BAA-705 / NCIMB 13946 / BJ001) (Methylobacterium populi), this protein is Large ribosomal subunit protein uL1.